The chain runs to 59 residues: Large ribosomal subunit protein uL30 (59 aa).

The protein belongs to the universal ribosomal protein uL30 family. As to quaternary structure, part of the 50S ribosomal subunit.

This chain is Large ribosomal subunit protein uL30, found in Macrococcus caseolyticus (strain JCSC5402) (Macrococcoides caseolyticum).